We begin with the raw amino-acid sequence, 305 residues long: NADH-cytochrome b5 reductase 1 (305 aa).

The chain crosses the membrane as a helical span at residues Val-8–Tyr-28. Positions Asn-44–Thr-156 constitute an FAD-binding FR-type domain. Residues Asp-136–Asn-166 and Val-175–Leu-210 each bind FAD.

It belongs to the flavoprotein pyridine nucleotide cytochrome reductase family. It depends on FAD as a cofactor. As to expression, widely expressed.

The protein resides in the membrane. It catalyses the reaction 2 Fe(III)-[cytochrome b5] + NADH = 2 Fe(II)-[cytochrome b5] + NAD(+) + H(+). NADH-cytochrome b5 reductases are involved in desaturation and elongation of fatty acids, cholesterol biosynthesis, drug metabolism, and, in erythrocyte, methemoglobin reduction. This chain is NADH-cytochrome b5 reductase 1 (CYB5R1), found in Homo sapiens (Human).